The primary structure comprises 174 residues: Negative modulator of initiation of replication (174 aa).

It belongs to the SeqA family. Homodimer. Polymerizes to form helical filaments.

The protein resides in the cytoplasm. Negative regulator of replication initiation, which contributes to regulation of DNA replication and ensures that replication initiation occurs exactly once per chromosome per cell cycle. Binds to pairs of hemimethylated GATC sequences in the oriC region, thus preventing assembly of replication proteins and re-initiation at newly replicated origins. Repression is relieved when the region becomes fully methylated. This is Negative modulator of initiation of replication from Pseudoalteromonas atlantica (strain T6c / ATCC BAA-1087).